A 172-amino-acid chain; its full sequence is Protein sym-1 (172 aa).

Helical transmembrane passes span 13–33 (PLLTQAVTTSILFGVGDVAAQ), 52–72 (MVLYGGAVFGPAATTWFRFLQ), 94–114 (GLFAPTFIGIFLGSMAVLEGT), 128–148 (LSTNWMVWPFVQMVNFKVVPL), and 152–172 (VLFVNVISIGWNCYLSWLNGQ).

The protein belongs to the peroxisomal membrane protein PXMP2/4 family.

The protein resides in the mitochondrion inner membrane. May be involved in cellular response to stress. Required to maintain mitochondrial DNA (mtDNA) integrity and stability. This is Protein sym-1 (sym-1) from Neurospora crassa (strain ATCC 24698 / 74-OR23-1A / CBS 708.71 / DSM 1257 / FGSC 987).